Consider the following 179-residue polypeptide: Large ribosomal subunit protein uL5 (179 aa).

The protein belongs to the universal ribosomal protein uL5 family. Part of the 50S ribosomal subunit; part of the 5S rRNA/L5/L18/L25 subcomplex. Contacts the 5S rRNA and the P site tRNA. Forms a bridge to the 30S subunit in the 70S ribosome.

In terms of biological role, this is one of the proteins that bind and probably mediate the attachment of the 5S RNA into the large ribosomal subunit, where it forms part of the central protuberance. In the 70S ribosome it contacts protein S13 of the 30S subunit (bridge B1b), connecting the 2 subunits; this bridge is implicated in subunit movement. Contacts the P site tRNA; the 5S rRNA and some of its associated proteins might help stabilize positioning of ribosome-bound tRNAs. This is Large ribosomal subunit protein uL5 from Klebsiella pneumoniae (strain 342).